The sequence spans 513 residues: Matrix metalloproteinase-27 (513 aa).

Positions 1–17 are cleaved as a signal peptide; sequence MKRLLLLFLFFITFSSA. The propeptide at 18 to 98 is activation peptide; sequence FPLVRMTENE…PRCGVPDVGQ (81 aa). N-linked (GlcNAc...) asparagine glycosylation is present at Asn55. The Cysteine switch motif lies at 89-96; it reads PRCGVPDV. Cys91 serves as a coordination point for Zn(2+). An N-linked (GlcNAc...) asparagine glycan is attached at Asn110. The Ca(2+) site is built by Asp121 and Asp155. Zn(2+) is bound at residue His165. Residues Asp173, Gly174, and Val178 each coordinate Ca(2+). A Zn(2+)-binding site is contributed by His181. The Ca(2+) site is built by Gly188 and Asp192. His194 provides a ligand contact to Zn(2+). Ca(2+) contacts are provided by Asp196 and Glu199. His216 lines the Zn(2+) pocket. Glu217 is an active-site residue. Residues His220 and His226 each coordinate Zn(2+). Hemopexin repeat units follow at residues 276-325, 326-371, 373-421, and 422-465; these read PHAC…WPSL, PADL…GFPG, VKKI…FPGI, and SIRV…WFQC. A disulfide bridge links Cys279 with Cys465. Asp286 is a binding site for Ca(2+). Positions 377 and 426 each coordinate Ca(2+). N-linked (GlcNAc...) asparagine glycosylation occurs at Asn452. Residues 466–513 form a required for retention in the endoplasmic reticulum region; sequence KEPKNSSFGFDINKEKAHSGGIKILYHKSLSLFIFGIVHLLKNTSIYQ.

Belongs to the peptidase M10A family. Requires Ca(2+) as cofactor. The cofactor is Zn(2+). N-glycosylated. As to expression, expressed in B-cells. Expressed in a subset of endometrial macrophages related to menstruation and in ovarian and peritoneal endometriotic lesions (at protein level).

It is found in the endoplasmic reticulum. In terms of biological role, matrix metalloproteinases degrade protein components of the extracellular matrix such as fibronectin, laminin, gelatins and/or collagens. The polypeptide is Matrix metalloproteinase-27 (MMP27) (Homo sapiens (Human)).